A 232-amino-acid chain; its full sequence is Large ribosomal subunit protein uL1 (232 aa).

The protein belongs to the universal ribosomal protein uL1 family. As to quaternary structure, part of the 50S ribosomal subunit.

Functionally, binds directly to 23S rRNA. The L1 stalk is quite mobile in the ribosome, and is involved in E site tRNA release. In terms of biological role, protein L1 is also a translational repressor protein, it controls the translation of the L11 operon by binding to its mRNA. This chain is Large ribosomal subunit protein uL1, found in Hahella chejuensis (strain KCTC 2396).